The following is a 406-amino-acid chain: Tryptophan 2,3-dioxygenase (406 aa).

S19 bears the Phosphoserine mark. Substrate-binding positions include 72–76 (FIITH) and R144. A heme-binding site is contributed by H328. T342 is a substrate binding site.

This sequence belongs to the tryptophan 2,3-dioxygenase family. As to quaternary structure, homotetramer. Dimer of dimers. Heme is required as a cofactor.

It carries out the reaction L-tryptophan + O2 = N-formyl-L-kynurenine. It participates in amino-acid degradation; L-tryptophan degradation via kynurenine pathway; L-kynurenine from L-tryptophan: step 1/2. Heme-dependent dioxygenase that catalyzes the oxidative cleavage of the L-tryptophan (L-Trp) pyrrole ring and converts L-tryptophan to N-formyl-L-kynurenine. Catalyzes the oxidative cleavage of the indole moiety. The polypeptide is Tryptophan 2,3-dioxygenase (Bos taurus (Bovine)).